The primary structure comprises 1401 residues: DNA-directed RNA polymerase subunit beta'' (1401 aa).

Residues cysteine 224, cysteine 294, cysteine 301, and cysteine 304 each contribute to the Zn(2+) site.

The protein belongs to the RNA polymerase beta' chain family. RpoC2 subfamily. As to quaternary structure, in plastids the minimal PEP RNA polymerase catalytic core is composed of four subunits: alpha, beta, beta', and beta''. When a (nuclear-encoded) sigma factor is associated with the core the holoenzyme is formed, which can initiate transcription. Zn(2+) is required as a cofactor.

The protein resides in the plastid. It is found in the chloroplast. The enzyme catalyses RNA(n) + a ribonucleoside 5'-triphosphate = RNA(n+1) + diphosphate. Functionally, DNA-dependent RNA polymerase catalyzes the transcription of DNA into RNA using the four ribonucleoside triphosphates as substrates. This is DNA-directed RNA polymerase subunit beta'' from Nymphaea alba (White water-lily).